Reading from the N-terminus, the 418-residue chain is Protein SSXT (418 aa).

Ser2 is subject to N-acetylserine. A transcriptional activation region spans residues 2 to 186 (SVAFAAPRQR…NQMTMSQGQP (185 aa)). The SH2-binding motif lies at 50–53 (YQQM). Disordered regions lie at residues 77-118 (APPT…PAPH) and 188-418 (GNYG…NYQQ). Residues 225-251 (YQGQQPPMGMMGQVNQGNHMMGQRQIP) are compositionally biased toward low complexity. A compositionally biased stretch (basic and acidic residues) spans 309 to 318 (GYDRPYEDSS). 3 stretches are compositionally biased toward low complexity: residues 328 to 337 (QYGQQQDAYQ), 345 to 366 (YPPQQQQYPGQQGYPGQQQGYG), and 376 to 393 (YPNYPQGQGQQYGGYRPT). Repeat copies occupy residues 344–356 (GYPPQQQQYPGQQ) and 357–369 (GYPGQQQGYGPSQ). The interval 344–369 (GYPPQQQQYPGQQGYPGQQQGYGPSQ) is 2 X 13 AA imperfect tandem repeats. The SH2-binding signature appears at 374–377 (PQYP). Positions 392–401 (PTQPGPPQPP) match the SH3-binding motif. Residues 394–403 (QPGPPQPPQQ) show a composition bias toward pro residues. Over residues 404–418 (RPYGYDQGQYGNYQQ) the composition is skewed to low complexity. The short motif at 413-416 (YGNY) is the SH2-binding element.

This sequence belongs to the SS18 family. In terms of assembly, interacts with MLLT10. Isoform 1 interacts with RBM14 isoform 1. Isoform 2 interacts with RBM14 isoform 1. Component of the multiprotein chromatin-remodeling complexes SWI/SNF: SWI/SNF-A (BAF), SWI/SNF-B (PBAF) and related complexes. The canonical complex contains a catalytic subunit (either SMARCA4/BRG1/BAF190A or SMARCA2/BRM/BAF190B) and at least SMARCE1, ACTL6A/BAF53, SMARCC1/BAF155, SMARCC2/BAF170, and SMARCB1/SNF5/BAF47. Other subunits specific to each of the complexes may also be present permitting several possible combinations developmentally and tissue specific. Component of the SWI/SNF (GBAF) subcomplex, which includes at least BICRA or BICRAL (mutually exclusive), BRD9, SS18, the core BAF subunits, SMARCA2/BRM, SMARCA4/BRG1/BAF190A, ACTL6A/BAF53, SMARCC1/BAF155, and SMARCD1/BAF60A. Fairly ubiquitously expressed. Expressed in synovial sarcomas and in other human cell lines. The fusion genes SSXT-SSX1 and SSXT-SSX2 are expressed only in synovial sarcomas.

It localises to the nucleus. Functionally, appears to function synergistically with RBM14 as a transcriptional coactivator. Isoform 1 and isoform 2 function in nuclear receptor coactivation. Isoform 1 and isoform 2 function in general transcriptional coactivation. Component of SWI/SNF chromatin remodeling subcomplex GBAF that carries out key enzymatic activities, changing chromatin structure by altering DNA-histone contacts within a nucleosome in an ATP-dependent manner. In Homo sapiens (Human), this protein is Protein SSXT (SS18).